We begin with the raw amino-acid sequence, 259 residues long: Eukaryotic translation initiation factor 3 subunit G-2 (259 aa).

The RRM domain occupies Ser179–Pro257.

Belongs to the eIF-3 subunit G family. In terms of assembly, component of the eukaryotic translation initiation factor 3 (eIF-3) complex. The eIF-3 complex interacts with pix.

The protein resides in the cytoplasm. Functionally, RNA-binding component of the eukaryotic translation initiation factor 3 (eIF-3) complex, which is involved in protein synthesis of a specialized repertoire of mRNAs and, together with other initiation factors, stimulates binding of mRNA and methionyl-tRNAi to the 40S ribosome. The eIF-3 complex specifically targets and initiates translation of a subset of mRNAs involved in cell proliferation. This subunit can bind 18S rRNA. This Drosophila mojavensis (Fruit fly) protein is Eukaryotic translation initiation factor 3 subunit G-2.